A 308-amino-acid polypeptide reads, in one-letter code: Ectoine dioxygenase (308 aa).

Q131 serves as a coordination point for L-ectoine. K137 serves as a coordination point for 2-oxoglutarate. The Fe cation site is built by H148, D150, and H249.

The protein belongs to the PhyH family. EctD subfamily. Homodimer. It depends on Fe(2+) as a cofactor.

It carries out the reaction L-ectoine + 2-oxoglutarate + O2 = 5-hydroxyectoine + succinate + CO2. Functionally, involved in the biosynthesis of 5-hydroxyectoine, called compatible solute, which helps organisms to survive extreme osmotic stress by acting as a highly soluble organic osmolyte. Catalyzes the 2-oxoglutarate-dependent selective hydroxylation of L-ectoine to yield (4S,5S)-5-hydroxyectoine. This is Ectoine dioxygenase from Bordetella bronchiseptica (strain ATCC BAA-588 / NCTC 13252 / RB50) (Alcaligenes bronchisepticus).